The primary structure comprises 348 residues: Phosphoribosylformylglycinamidine cyclo-ligase (348 aa).

The protein belongs to the AIR synthase family.

The protein localises to the cytoplasm. The enzyme catalyses 2-formamido-N(1)-(5-O-phospho-beta-D-ribosyl)acetamidine + ATP = 5-amino-1-(5-phospho-beta-D-ribosyl)imidazole + ADP + phosphate + H(+). It functions in the pathway purine metabolism; IMP biosynthesis via de novo pathway; 5-amino-1-(5-phospho-D-ribosyl)imidazole from N(2)-formyl-N(1)-(5-phospho-D-ribosyl)glycinamide: step 2/2. The sequence is that of Phosphoribosylformylglycinamidine cyclo-ligase from Citrifermentans bemidjiense (strain ATCC BAA-1014 / DSM 16622 / JCM 12645 / Bem) (Geobacter bemidjiensis).